Consider the following 573-residue polypeptide: Maestro heat-like repeat-containing protein family member 9 (573 aa).

5 HEAT repeats span residues 118 to 155, 252 to 289, 292 to 328, 357 to 394, and 418 to 458; these read LYKL…FTVT, PLLT…FHAE, TMVS…TSPK, SVAP…ITNL, and QYFP…LLNC.

The protein is Maestro heat-like repeat-containing protein family member 9 (MROH9) of Homo sapiens (Human).